A 288-amino-acid chain; its full sequence is Bifunctional protein FolD (288 aa).

NADP(+) contacts are provided by residues G166–S168 and I232.

This sequence belongs to the tetrahydrofolate dehydrogenase/cyclohydrolase family. In terms of assembly, homodimer.

It catalyses the reaction (6R)-5,10-methylene-5,6,7,8-tetrahydrofolate + NADP(+) = (6R)-5,10-methenyltetrahydrofolate + NADPH. The catalysed reaction is (6R)-5,10-methenyltetrahydrofolate + H2O = (6R)-10-formyltetrahydrofolate + H(+). The protein operates within one-carbon metabolism; tetrahydrofolate interconversion. Functionally, catalyzes the oxidation of 5,10-methylenetetrahydrofolate to 5,10-methenyltetrahydrofolate and then the hydrolysis of 5,10-methenyltetrahydrofolate to 10-formyltetrahydrofolate. In Escherichia coli O139:H28 (strain E24377A / ETEC), this protein is Bifunctional protein FolD.